The primary structure comprises 674 residues: Pre-mRNA-splicing factor cwf4 (674 aa).

HAT repeat units lie at residues 50–82 (EFQG…WELD), 84–116 (KEFA…CEMK), 118–150 (RNIN…MEEM), 152–183 (GNIT…MERR), 185–216 (HENE…FEEE), 218–253 (GNAA…FEIR), 255–289 (KEYE…FEKQ), 299–331 (TVLD…LEES), 333–367 (GDIN…IWLN), 377–413 (KDVD…FELR), 415–446 (RKID…FEDA), 448–480 (KQFD…LETK), 482–516 (GDSD…FEFE), 518–549 (MEYG…FEIA), 567–608 (TAVV…MHGT), and 610–643 (DTRK…YLFP).

It belongs to the crooked-neck family. Belongs to the 40S cdc5-associated complex (or cwf complex), a spliceosome sub-complex reminiscent of a late-stage spliceosome composed of the U2, U5 and U6 snRNAs and at least brr2, cdc5, cwf2/prp3, cwf3/syf1, cwf4/syf3, cwf5/ecm2, spp42/cwf6, cwf7/spf27, cwf8, cwf9, cwf10, cwf11, cwf12, prp45/cwf13, cwf14, cwf15, cwf16, cwf17, cwf18, cwf19, cwf20, cwf21, cwf22, cwf23, cwf24, cwf25, cwf26, cyp7/cwf27, cwf28, cwf29/ist3, lea1, msl1, prp5/cwf1, prp10, prp12/sap130, prp17, prp22, sap61, sap62, sap114, sap145, slu7, smb1, smd1, smd3, smf1, smg1 and syf2.

It localises to the nucleus. Functionally, involved in pre-mRNA splicing and cell cycle progression. Required for the spliceosome assembly and initiation of the DNA replication. In Schizosaccharomyces pombe (strain 972 / ATCC 24843) (Fission yeast), this protein is Pre-mRNA-splicing factor cwf4 (cwf4).